A 263-amino-acid chain; its full sequence is MAWLSRVRGVSPVTRLAAIRRSFGSAAALEFDYDSDDEYLYGDDRRLAEPRLGLDGSGPDRGVQWVLMGAPGAWRHVFAERLSKLLEVPHISMGSLVRQELNPRSSLYKEIASAVNERKLVPKSVVFALLSKRLEEGYARGETGFILHGIPRTRFQAETLDQIAQIDLVVNLKCSEDHLVNRNETALPQQEFLGSMLHSPVAINARRESVGVYAQEVEEYYRKQRKLLDFHVGGATSADTWQGLLAALHLKQVNLTTSQKLTL.

The N-terminal 30 residues, methionine 1–glutamate 30, are a transit peptide targeting the mitochondrion. An ATP-binding site is contributed by glycine 72–valine 77. An NMP region spans residues serine 92–valine 121. Residues arginine 98, lysine 119 to valine 121, glycine 149 to arginine 152, glutamine 156, and arginine 206 contribute to the AMP site. Glycine 234 contacts ATP.

Belongs to the adenylate kinase family. In terms of assembly, monomer.

The protein localises to the mitochondrion. The enzyme catalyses AMP + ATP = 2 ADP. In terms of biological role, catalyzes the reversible transfer of the terminal phosphate group between ATP and AMP. Plays an important role in cellular energy homeostasis and in adenine nucleotide metabolism. The chain is Probable adenylate kinase 7, mitochondrial from Arabidopsis thaliana (Mouse-ear cress).